A 202-amino-acid chain; its full sequence is Outer-membrane lipoprotein carrier protein (202 aa).

The signal sequence occupies residues 1–20; the sequence is MKKQLLIGSVLLVASSQVWA.

It belongs to the LolA family. As to quaternary structure, monomer.

It is found in the periplasm. Its function is as follows. Participates in the translocation of lipoproteins from the inner membrane to the outer membrane. Only forms a complex with a lipoprotein if the residue after the N-terminal Cys is not an aspartate (The Asp acts as a targeting signal to indicate that the lipoprotein should stay in the inner membrane). This Aeromonas salmonicida (strain A449) protein is Outer-membrane lipoprotein carrier protein.